Consider the following 61-residue polypeptide: Translational regulator CsrA (61 aa).

Belongs to the CsrA/RsmA family. As to quaternary structure, homodimer; the beta-strands of each monomer intercalate to form a hydrophobic core, while the alpha-helices form wings that extend away from the core.

It localises to the cytoplasm. In terms of biological role, a key translational regulator that binds mRNA to regulate translation initiation and/or mRNA stability. Mediates global changes in gene expression, shifting from rapid growth to stress survival by linking envelope stress, the stringent response and the catabolite repression systems. Usually binds in the 5'-UTR; binding at or near the Shine-Dalgarno sequence prevents ribosome-binding, repressing translation, binding elsewhere in the 5'-UTR can activate translation and/or stabilize the mRNA. Its function is antagonized by small RNA(s). In Actinobacillus succinogenes (strain ATCC 55618 / DSM 22257 / CCUG 43843 / 130Z), this protein is Translational regulator CsrA.